The primary structure comprises 478 residues: Glucose-6-phosphate 1-dehydrogenase (478 aa).

Residues Arg-48, 86 to 87, and Lys-142 each bind NADP(+); that span reads DF. His-172, Lys-176, Glu-210, and Asp-229 together coordinate substrate. His-234 acts as the Proton acceptor in catalysis. 2 residues coordinate substrate: Lys-334 and Lys-339.

Belongs to the glucose-6-phosphate dehydrogenase family.

The enzyme catalyses D-glucose 6-phosphate + NADP(+) = 6-phospho-D-glucono-1,5-lactone + NADPH + H(+). It participates in carbohydrate degradation; pentose phosphate pathway; D-ribulose 5-phosphate from D-glucose 6-phosphate (oxidative stage): step 1/3. In terms of biological role, catalyzes the oxidation of glucose 6-phosphate to 6-phosphogluconolactone. The polypeptide is Glucose-6-phosphate 1-dehydrogenase (Borreliella burgdorferi (strain ATCC 35210 / DSM 4680 / CIP 102532 / B31) (Borrelia burgdorferi)).